A 729-amino-acid chain; its full sequence is Fatty acid oxidation complex subunit alpha (729 aa).

The tract at residues 1-189 (MLYKGDTLYL…KIGLVDGVVK (189 aa)) is enoyl-CoA hydratase/isomerase. Position 296 (aspartate 296) interacts with substrate. The 3-hydroxyacyl-CoA dehydrogenase stretch occupies residues 311–729 (ETPKQAAVLG…ARLVGDLKTA (419 aa)). NAD(+) is bound by residues methionine 324, aspartate 343, 400–402 (VVE), lysine 407, and serine 429. Histidine 450 serves as the catalytic For 3-hydroxyacyl-CoA dehydrogenase activity. Asparagine 453 contacts NAD(+). Residues asparagine 500 and tyrosine 660 each contribute to the substrate site.

It in the N-terminal section; belongs to the enoyl-CoA hydratase/isomerase family. In the C-terminal section; belongs to the 3-hydroxyacyl-CoA dehydrogenase family. In terms of assembly, heterotetramer of two alpha chains (FadB) and two beta chains (FadA).

It carries out the reaction a (3S)-3-hydroxyacyl-CoA + NAD(+) = a 3-oxoacyl-CoA + NADH + H(+). The enzyme catalyses a (3S)-3-hydroxyacyl-CoA = a (2E)-enoyl-CoA + H2O. The catalysed reaction is a 4-saturated-(3S)-3-hydroxyacyl-CoA = a (3E)-enoyl-CoA + H2O. It catalyses the reaction (3S)-3-hydroxybutanoyl-CoA = (3R)-3-hydroxybutanoyl-CoA. It carries out the reaction a (3Z)-enoyl-CoA = a 4-saturated (2E)-enoyl-CoA. The enzyme catalyses a (3E)-enoyl-CoA = a 4-saturated (2E)-enoyl-CoA. It functions in the pathway lipid metabolism; fatty acid beta-oxidation. Its function is as follows. Involved in the aerobic and anaerobic degradation of long-chain fatty acids via beta-oxidation cycle. Catalyzes the formation of 3-oxoacyl-CoA from enoyl-CoA via L-3-hydroxyacyl-CoA. It can also use D-3-hydroxyacyl-CoA and cis-3-enoyl-CoA as substrate. The protein is Fatty acid oxidation complex subunit alpha of Escherichia coli (strain SE11).